A 427-amino-acid polypeptide reads, in one-letter code: Anaerobic glycerol-3-phosphate dehydrogenase subunit B (427 aa).

It belongs to the anaerobic G-3-P dehydrogenase subunit B family. As to quaternary structure, composed of a catalytic GlpA/B dimer and of membrane bound GlpC. Requires FMN as cofactor.

The enzyme catalyses a quinone + sn-glycerol 3-phosphate = dihydroxyacetone phosphate + a quinol. It participates in polyol metabolism; glycerol degradation via glycerol kinase pathway; glycerone phosphate from sn-glycerol 3-phosphate (anaerobic route): step 1/1. Functionally, conversion of glycerol 3-phosphate to dihydroxyacetone. Uses fumarate or nitrate as electron acceptor. This is Anaerobic glycerol-3-phosphate dehydrogenase subunit B from Glaesserella parasuis serovar 5 (strain SH0165) (Haemophilus parasuis).